We begin with the raw amino-acid sequence, 688 residues long: Methionine--tRNA ligase (688 aa).

Residues 13-23 carry the 'HIGH' region motif; that stretch reads PYANGNFHIGH. Zn(2+) is bound by residues C144, C147, C157, and C160. A 'KMSKS' region motif is present at residues 342–346; that stretch reads KMSKS. K345 lines the ATP pocket. Positions 582–688 constitute a tRNA-binding domain; the sequence is DFAKVDLRIA…PGAQPGMRIH (107 aa).

The protein belongs to the class-I aminoacyl-tRNA synthetase family. MetG type 1 subfamily. Homodimer. It depends on Zn(2+) as a cofactor.

It is found in the cytoplasm. It carries out the reaction tRNA(Met) + L-methionine + ATP = L-methionyl-tRNA(Met) + AMP + diphosphate. In terms of biological role, is required not only for elongation of protein synthesis but also for the initiation of all mRNA translation through initiator tRNA(fMet) aminoacylation. The chain is Methionine--tRNA ligase from Acidovorax sp. (strain JS42).